The sequence spans 349 residues: Nicotinate-nucleotide--dimethylbenzimidazole phosphoribosyltransferase (349 aa).

Glu318 (proton acceptor) is an active-site residue.

It belongs to the CobT family.

The catalysed reaction is 5,6-dimethylbenzimidazole + nicotinate beta-D-ribonucleotide = alpha-ribazole 5'-phosphate + nicotinate + H(+). It participates in nucleoside biosynthesis; alpha-ribazole biosynthesis; alpha-ribazole from 5,6-dimethylbenzimidazole: step 1/2. In terms of biological role, catalyzes the synthesis of alpha-ribazole-5'-phosphate from nicotinate mononucleotide (NAMN) and 5,6-dimethylbenzimidazole (DMB). The sequence is that of Nicotinate-nucleotide--dimethylbenzimidazole phosphoribosyltransferase from Alkaliphilus metalliredigens (strain QYMF).